The following is a 144-amino-acid chain: Large ribosomal subunit protein uL15 (144 aa).

The segment at 1-58 (MRLNELAPEPGSRPSAKRVGRGIGSGLGKTGGRGHKGLKSRSGGSVAPGFEGGQQPLA) is disordered. Residues 21 to 31 (RGIGSGLGKTG) are compositionally biased toward gly residues.

Belongs to the universal ribosomal protein uL15 family. As to quaternary structure, part of the 50S ribosomal subunit.

Its function is as follows. Binds to the 23S rRNA. The sequence is that of Large ribosomal subunit protein uL15 from Marinobacter nauticus (strain ATCC 700491 / DSM 11845 / VT8) (Marinobacter aquaeolei).